Consider the following 200-residue polypeptide: MAKYQTIEAAVRSEFGKGSARRARVAGQIPAVVYGADVESNLHVTIDHRTFAALVRQEGVNAVLELDIEGQKQLTMIKHIDQNVLTFHIDHLDLLAIKRGEKVEVDVPVIVEGEPAPGTMWVQDADTIKVEADVLSIPEEFTVSIEGLELGAQITAADIKLEGDTTLVEDPETLIVNIVLPAVEEEDTEEDEAAEEAATE.

Belongs to the bacterial ribosomal protein bL25 family. CTC subfamily. Part of the 50S ribosomal subunit; part of the 5S rRNA/L5/L18/L25 subcomplex. Contacts the 5S rRNA. Binds to the 5S rRNA independently of L5 and L18.

In terms of biological role, this is one of the proteins that binds to the 5S RNA in the ribosome where it forms part of the central protuberance. In Corynebacterium glutamicum (strain ATCC 13032 / DSM 20300 / JCM 1318 / BCRC 11384 / CCUG 27702 / LMG 3730 / NBRC 12168 / NCIMB 10025 / NRRL B-2784 / 534), this protein is Large ribosomal subunit protein bL25.